A 512-amino-acid chain; its full sequence is Glycerol-3-phosphate dehydrogenase (512 aa).

An FAD-binding site is contributed by 16–44 (DVAVVGGGINGVGIAADAAGRGLSVFLCE).

It belongs to the FAD-dependent glycerol-3-phosphate dehydrogenase family. The cofactor is FAD.

The protein resides in the cytoplasm. The catalysed reaction is a quinone + sn-glycerol 3-phosphate = dihydroxyacetone phosphate + a quinol. The protein is Glycerol-3-phosphate dehydrogenase (glpD) of Pseudomonas aeruginosa (strain ATCC 15692 / DSM 22644 / CIP 104116 / JCM 14847 / LMG 12228 / 1C / PRS 101 / PAO1).